The following is a 60-amino-acid chain: Short neurotoxin 1 (60 aa).

4 disulfide bridges follow: C3-C22, C17-C39, C41-C52, and C53-C58.

It belongs to the three-finger toxin family. Short-chain subfamily. Type I alpha-neurotoxin sub-subfamily. Expressed by the venom gland.

It localises to the secreted. In terms of biological role, binds to muscle nicotinic acetylcholine receptor (nAChR) and inhibit acetylcholine from binding to the receptor, thereby impairing neuromuscular transmission. The protein is Short neurotoxin 1 of Hydrophis schistosus (Beaked sea snake).